The primary structure comprises 226 residues: dTTP/UTP pyrophosphatase (226 aa).

Aspartate 85 functions as the Proton acceptor in the catalytic mechanism.

The protein belongs to the Maf family. YhdE subfamily. Requires a divalent metal cation as cofactor.

Its subcellular location is the cytoplasm. It carries out the reaction dTTP + H2O = dTMP + diphosphate + H(+). The catalysed reaction is UTP + H2O = UMP + diphosphate + H(+). Its function is as follows. Nucleoside triphosphate pyrophosphatase that hydrolyzes dTTP and UTP. May have a dual role in cell division arrest and in preventing the incorporation of modified nucleotides into cellular nucleic acids. This is dTTP/UTP pyrophosphatase from Psychrobacter cryohalolentis (strain ATCC BAA-1226 / DSM 17306 / VKM B-2378 / K5).